The primary structure comprises 190 residues: MNMVVIGVTGMPGAGKGVVSRIAESMGFRVIRMGDVIRDEARKRGEDPGVTAVRLREEYGKYVVAEKCVERIQESESEMFLIEGIRSPHEVEIFRKRFPGFRVISVFSTRKTRFRRLRKRQREDDSQRYAEFVERDERELGFGIGDVIATSDYMIVNEGPIWKIKKQAKQILRKLAEKGEESSRGGQEDG.

10–17 (GMPGAGKG) provides a ligand contact to ATP.

This sequence belongs to the UPF0200 family.

The polypeptide is UPF0200 protein MTH_434 (Methanothermobacter thermautotrophicus (strain ATCC 29096 / DSM 1053 / JCM 10044 / NBRC 100330 / Delta H) (Methanobacterium thermoautotrophicum)).